The primary structure comprises 184 residues: MSCRSEHIWIEPIKGARKTSNFCWAIILFLGSLGFLLVGTSSYLGRNLISLFPSQEIVFFPQGIVMSFYGIAGLFISSYLWCTISWNVGSGYDRFDIKDGIVCIFRWGFPGKNRRVFLRFLIKDIQSVRIEVKEGIYARRVLYMDIRGQGAIPLTRTDENFTPREMEQKAAELAYFLRVPIEVF.

The next 2 helical transmembrane spans lie at 22–42 (FCWA…GTSS) and 57–77 (IVFF…LFIS).

It belongs to the Ycf4 family.

The protein resides in the plastid. It localises to the chloroplast thylakoid membrane. In terms of biological role, seems to be required for the assembly of the photosystem I complex. The chain is Photosystem I assembly protein Ycf4 from Helianthus annuus (Common sunflower).